Consider the following 273-residue polypeptide: 4-hydroxy-tetrahydrodipicolinate reductase (273 aa).

Residues 12 to 17 (GAGGRM) and Glu38 contribute to the NAD(+) site. Position 39 (Arg39) interacts with NADP(+). NAD(+) contacts are provided by residues 102-104 (GTT) and 126-129 (AANF). Residue His159 is the Proton donor/acceptor of the active site. His160 provides a ligand contact to (S)-2,3,4,5-tetrahydrodipicolinate. Lys163 (proton donor) is an active-site residue. 169-170 (GT) contributes to the (S)-2,3,4,5-tetrahydrodipicolinate binding site.

Belongs to the DapB family. Homotetramer.

It is found in the cytoplasm. It carries out the reaction (S)-2,3,4,5-tetrahydrodipicolinate + NAD(+) + H2O = (2S,4S)-4-hydroxy-2,3,4,5-tetrahydrodipicolinate + NADH + H(+). The catalysed reaction is (S)-2,3,4,5-tetrahydrodipicolinate + NADP(+) + H2O = (2S,4S)-4-hydroxy-2,3,4,5-tetrahydrodipicolinate + NADPH + H(+). It participates in amino-acid biosynthesis; L-lysine biosynthesis via DAP pathway; (S)-tetrahydrodipicolinate from L-aspartate: step 4/4. Its function is as follows. Catalyzes the conversion of 4-hydroxy-tetrahydrodipicolinate (HTPA) to tetrahydrodipicolinate. This Escherichia coli O139:H28 (strain E24377A / ETEC) protein is 4-hydroxy-tetrahydrodipicolinate reductase.